The primary structure comprises 252 residues: Large ribosomal subunit protein uL4 (252 aa).

It belongs to the universal ribosomal protein uL4 family. In terms of assembly, part of the 50S ribosomal subunit.

In terms of biological role, one of the primary rRNA binding proteins, this protein initially binds near the 5'-end of the 23S rRNA. It is important during the early stages of 50S assembly. It makes multiple contacts with different domains of the 23S rRNA in the assembled 50S subunit and ribosome. Functionally, forms part of the polypeptide exit tunnel. The protein is Large ribosomal subunit protein uL4 of Archaeoglobus fulgidus (strain ATCC 49558 / DSM 4304 / JCM 9628 / NBRC 100126 / VC-16).